We begin with the raw amino-acid sequence, 321 residues long: MNFQLIDGEALLAQLQPALGDIKGKLTPNVDMRKVTWFRTGGLAELFYQPADEADLALFLKTLPEFISVTIVGIGSNLLVRDGGIPGVVIRLSAKGFGQVQQVSPKRFLVGAATAGKHLAAAALEAEITGFHFYHGIPGGLGGALKMNAGANGIETAARVVEVYALDRKGRHHILSLADMHYSYRHCAIPKDFIFTAALLEGEPGNRDDIRAAMDEVALHRETVQPVREKTGGSTFRNPENISAWRVIDEAGCRGLQIGGAQMSEMHCNFMINTGQATGYDLEALGETVRARVFAHSAHLLQWEIQRIGQFEQSRIVPSFG.

The region spanning 39 to 205 (RTGGLAELFY…TAALLEGEPG (167 aa)) is the FAD-binding PCMH-type domain. Arginine 185 is a catalytic residue. Catalysis depends on serine 234, which acts as the Proton donor. The active site involves glutamate 304.

The protein belongs to the MurB family. FAD serves as cofactor.

The protein localises to the cytoplasm. The enzyme catalyses UDP-N-acetyl-alpha-D-muramate + NADP(+) = UDP-N-acetyl-3-O-(1-carboxyvinyl)-alpha-D-glucosamine + NADPH + H(+). The protein operates within cell wall biogenesis; peptidoglycan biosynthesis. In terms of biological role, cell wall formation. The polypeptide is UDP-N-acetylenolpyruvoylglucosamine reductase (Bartonella quintana (strain Toulouse) (Rochalimaea quintana)).